Reading from the N-terminus, the 553-residue chain is Phosphoglucomutase (553 aa).

The interval 1-25 is disordered; sequence MQATIKRYPTSPISGQTLGTSGLRK. Over residues 11-20 the composition is skewed to polar residues; it reads SPISGQTLGT. Substrate is bound by residues T20, R24, 117-118, and K131; that span reads SH. S117 (phosphoserine intermediate) is an active-site residue. Residue S117 coordinates Mg(2+). The Mg(2+) site is built by D289, D291, and D293. Residues 293 to 294, T352, 371 to 373, K384, and R509 contribute to the substrate site; these read DR and EES.

The protein belongs to the phosphohexose mutase family. Requires Mg(2+) as cofactor.

It localises to the cytoplasm. The catalysed reaction is alpha-D-glucose 1-phosphate = alpha-D-glucose 6-phosphate. In terms of biological role, catalyzes the reversible conversion of glucose 1-phosphate into glucose 6-phosphate. This enzyme participates in both the breakdown and synthesis of glucose. In Entamoeba histolytica (strain ATCC 30459 / HM-1:IMSS / ABRM), this protein is Phosphoglucomutase.